The chain runs to 92 residues: UPF0250 protein VP0718 (92 aa).

It belongs to the UPF0250 family.

This Vibrio parahaemolyticus serotype O3:K6 (strain RIMD 2210633) protein is UPF0250 protein VP0718.